We begin with the raw amino-acid sequence, 266 residues long: Methylsterol monooxygenase 2-2 (266 aa).

3 helical membrane passes run 24–44 (IGSF…FIFL), 71–91 (RLLL…YPVF), and 107–127 (EVSA…YWGH). The Fatty acid hydroxylase domain occupies 113 to 247 (LFYFIIEDFV…FVYMDWIFGT (135 aa)). The Histidine box-1 motif lies at 127 to 131 (HRILH). Positions 140–144 (HSVHH) match the Histidine box-2 motif. A helical membrane pass occupies residues 162-182 (ILFLGFATIVGPALTGPHLIT). The short motif at 219-225 (FHDYHHR) is the Histidine box-3 element.

This sequence belongs to the sterol desaturase family. Fe cation is required as a cofactor. Expressed in shoots, roots, siliques and flowers, and, slightly, in developing seeds.

The protein localises to the endoplasmic reticulum membrane. It carries out the reaction 4,4-dimethyl-5alpha-cholest-7-en-3beta-ol + 6 Fe(II)-[cytochrome b5] + 3 O2 + 5 H(+) = 4alpha-carboxy-4beta-methyl-5alpha-cholest-7-ene-3beta-ol + 6 Fe(III)-[cytochrome b5] + 4 H2O. It catalyses the reaction 24-methylidenelophenol + 6 Fe(II)-[cytochrome b5] + 3 O2 + 5 H(+) = 4alpha-carboxy-ergosta-7,24(24(1))-dien-3beta-ol + 6 Fe(III)-[cytochrome b5] + 4 H2O. Non-heme iron oxygenase involved in sterols biosynthesis by catalyzing the removal of the second methyl group at the C-4 position. 24-ethylidenelophenol and 24-ethyllophenol are the preferred substrates. Together with SMO2-1, required during embryogenesis, probably by maintaining sterols and auxin homeostasis. The protein is Methylsterol monooxygenase 2-2 of Arabidopsis thaliana (Mouse-ear cress).